The following is a 120-amino-acid chain: Aspartate 1-decarboxylase (120 aa).

Ser25 acts as the Schiff-base intermediate with substrate; via pyruvic acid in catalysis. Pyruvic acid (Ser) is present on Ser25. Residue Thr57 participates in substrate binding. Tyr58 (proton donor) is an active-site residue. Substrate is bound at residue 73 to 75; that stretch reads GAA.

This sequence belongs to the PanD family. In terms of assembly, heterooctamer of four alpha and four beta subunits. Pyruvate is required as a cofactor. Post-translationally, is synthesized initially as an inactive proenzyme, which is activated by self-cleavage at a specific serine bond to produce a beta-subunit with a hydroxyl group at its C-terminus and an alpha-subunit with a pyruvoyl group at its N-terminus.

Its subcellular location is the cytoplasm. The catalysed reaction is L-aspartate + H(+) = beta-alanine + CO2. The protein operates within cofactor biosynthesis; (R)-pantothenate biosynthesis; beta-alanine from L-aspartate: step 1/1. Catalyzes the pyruvoyl-dependent decarboxylation of aspartate to produce beta-alanine. In Methylibium petroleiphilum (strain ATCC BAA-1232 / LMG 22953 / PM1), this protein is Aspartate 1-decarboxylase.